Reading from the N-terminus, the 251-residue chain is Pantothenate synthetase (251 aa).

M28–H35 contributes to the ATP binding site. The Proton donor role is filled by H35. Q59 serves as a coordination point for (R)-pantoate. Q59 provides a ligand contact to beta-alanine. ATP is bound at residue G145 to D148. Q151 contributes to the (R)-pantoate binding site. Residues V174 and K182–R185 each bind ATP.

This sequence belongs to the pantothenate synthetase family. Homodimer.

It is found in the cytoplasm. The enzyme catalyses (R)-pantoate + beta-alanine + ATP = (R)-pantothenate + AMP + diphosphate + H(+). It functions in the pathway cofactor biosynthesis; (R)-pantothenate biosynthesis; (R)-pantothenate from (R)-pantoate and beta-alanine: step 1/1. Catalyzes the condensation of pantoate with beta-alanine in an ATP-dependent reaction via a pantoyl-adenylate intermediate. In Bdellovibrio bacteriovorus (strain ATCC 15356 / DSM 50701 / NCIMB 9529 / HD100), this protein is Pantothenate synthetase.